The primary structure comprises 938 residues: Isoleucine--tRNA ligase (938 aa).

The short motif at 58–68 (PYANGSIHIGH) is the 'HIGH' region element. Residue E561 coordinates L-isoleucyl-5'-AMP. The short motif at 602 to 606 (KMSKS) is the 'KMSKS' region element. K605 lines the ATP pocket. Residues C901, C904, C921, and C924 each contribute to the Zn(2+) site.

This sequence belongs to the class-I aminoacyl-tRNA synthetase family. IleS type 1 subfamily. As to quaternary structure, monomer. Zn(2+) is required as a cofactor.

Its subcellular location is the cytoplasm. It catalyses the reaction tRNA(Ile) + L-isoleucine + ATP = L-isoleucyl-tRNA(Ile) + AMP + diphosphate. Its function is as follows. Catalyzes the attachment of isoleucine to tRNA(Ile). As IleRS can inadvertently accommodate and process structurally similar amino acids such as valine, to avoid such errors it has two additional distinct tRNA(Ile)-dependent editing activities. One activity is designated as 'pretransfer' editing and involves the hydrolysis of activated Val-AMP. The other activity is designated 'posttransfer' editing and involves deacylation of mischarged Val-tRNA(Ile). The sequence is that of Isoleucine--tRNA ligase from Sodalis glossinidius (strain morsitans).